Consider the following 367-residue polypeptide: Histidinol-phosphate aminotransferase (367 aa).

Position 227 is an N6-(pyridoxal phosphate)lysine (Lys-227).

The protein belongs to the class-II pyridoxal-phosphate-dependent aminotransferase family. Histidinol-phosphate aminotransferase subfamily. In terms of assembly, homodimer. The cofactor is pyridoxal 5'-phosphate.

It catalyses the reaction L-histidinol phosphate + 2-oxoglutarate = 3-(imidazol-4-yl)-2-oxopropyl phosphate + L-glutamate. The protein operates within amino-acid biosynthesis; L-histidine biosynthesis; L-histidine from 5-phospho-alpha-D-ribose 1-diphosphate: step 7/9. The sequence is that of Histidinol-phosphate aminotransferase from Leptospira borgpetersenii serovar Hardjo-bovis (strain JB197).